A 385-amino-acid polypeptide reads, in one-letter code: 8-amino-7-oxononanoate synthase (385 aa).

Substrate is bound at residue Arg-21. 108–109 serves as a coordination point for pyridoxal 5'-phosphate; that stretch reads GF. Residue His-133 coordinates substrate. Positions 179, 207, and 233 each coordinate pyridoxal 5'-phosphate. An N6-(pyridoxal phosphate)lysine modification is found at Lys-236. Thr-352 provides a ligand contact to substrate.

This sequence belongs to the class-II pyridoxal-phosphate-dependent aminotransferase family. BioF subfamily. As to quaternary structure, homodimer. The cofactor is pyridoxal 5'-phosphate.

The enzyme catalyses 6-carboxyhexanoyl-[ACP] + L-alanine + H(+) = (8S)-8-amino-7-oxononanoate + holo-[ACP] + CO2. It participates in cofactor biosynthesis; biotin biosynthesis. Catalyzes the decarboxylative condensation of pimeloyl-[acyl-carrier protein] and L-alanine to produce 8-amino-7-oxononanoate (AON), [acyl-carrier protein], and carbon dioxide. In Salmonella paratyphi B (strain ATCC BAA-1250 / SPB7), this protein is 8-amino-7-oxononanoate synthase.